The following is a 119-amino-acid chain: Fluoride-specific ion channel FluC 1 (119 aa).

The next 4 membrane-spanning stretches (helical) occupy residues Val-6–Val-26, Phe-31–Tyr-51, Val-66–Ile-86, and Arg-91–Ala-111.

It belongs to the fluoride channel Fluc/FEX (TC 1.A.43) family.

Its subcellular location is the cell membrane. It catalyses the reaction fluoride(in) = fluoride(out). Functionally, fluoride-specific ion channel. Important for reducing fluoride concentration in the cell, thus reducing its toxicity. This chain is Fluoride-specific ion channel FluC 1, found in Natronomonas pharaonis (strain ATCC 35678 / DSM 2160 / CIP 103997 / JCM 8858 / NBRC 14720 / NCIMB 2260 / Gabara) (Halobacterium pharaonis).